The following is a 245-amino-acid chain: Eukaryotic translation initiation factor 6 (245 aa).

Phosphoserine; by CK1 is present on residues S174 and S175.

This sequence belongs to the eIF-6 family. As to quaternary structure, monomer. Associates with the 60S ribosomal subunit. Phosphorylation at Ser-174 and Ser-175 promotes nuclear export.

It is found in the cytoplasm. It localises to the nucleus. The protein localises to the nucleolus. In terms of biological role, binds to the 60S ribosomal subunit and prevents its association with the 40S ribosomal subunit to form the 80S initiation complex in the cytoplasm. Is also involved in ribosome biogenesis. Associates with pre-60S subunits in the nucleus and is involved in its nuclear export. The protein is Eukaryotic translation initiation factor 6 of Candida albicans (strain SC5314 / ATCC MYA-2876) (Yeast).